A 450-amino-acid chain; its full sequence is Tubulin beta chain (450 aa).

7 residues coordinate GTP: E69, S138, G142, T143, G144, N204, and N226. Residue E69 coordinates Mg(2+). Residues D427–Q450 form a disordered region. A compositionally biased stretch (acidic residues) spans I430 to Q450.

This sequence belongs to the tubulin family. In terms of assembly, dimer of alpha and beta chains. A typical microtubule is a hollow water-filled tube with an outer diameter of 25 nm and an inner diameter of 15 nM. Alpha-beta heterodimers associate head-to-tail to form protofilaments running lengthwise along the microtubule wall with the beta-tubulin subunit facing the microtubule plus end conferring a structural polarity. Microtubules usually have 13 protofilaments but different protofilament numbers can be found in some organisms and specialized cells. Mg(2+) is required as a cofactor.

It is found in the cytoplasm. Its subcellular location is the cytoskeleton. Its function is as follows. Tubulin is the major constituent of microtubules, a cylinder consisting of laterally associated linear protofilaments composed of alpha- and beta-tubulin heterodimers. Microtubules grow by the addition of GTP-tubulin dimers to the microtubule end, where a stabilizing cap forms. Below the cap, tubulin dimers are in GDP-bound state, owing to GTPase activity of alpha-tubulin. The polypeptide is Tubulin beta chain (Bombyx mori (Silk moth)).